A 213-amino-acid polypeptide reads, in one-letter code: Viral dihydrofolate reductase (213 aa).

Positions 4–184 (LLNCIVAVDQ…IKYKFEVYEK (181 aa)) constitute a DHFR domain. Residues A10 and 16 to 22 (GIGKKGH) each bind NADP(+). 31–36 (DFKYFQ) lines the substrate pocket. 54–56 (KNT) is a binding site for NADP(+). R70 is a binding site for substrate. NADP(+)-binding positions include 76–78 (SKK) and 116–123 (GGSSVYKD).

Belongs to the dihydrofolate reductase family.

It catalyses the reaction (6S)-5,6,7,8-tetrahydrofolate + NADP(+) = 7,8-dihydrofolate + NADPH + H(+). The protein operates within cofactor biosynthesis; tetrahydrofolate biosynthesis; 5,6,7,8-tetrahydrofolate from 7,8-dihydrofolate: step 1/1. In terms of biological role, key enzyme in folate metabolism. Catalyzes an essential reaction for de novo glycine and purine synthesis, and for DNA precursor synthesis. This is Viral dihydrofolate reductase (DHFR) from Saimiri sciureus (Common squirrel monkey).